Here is a 337-residue protein sequence, read N- to C-terminus: GTPase Obg (337 aa).

Residues 1 to 159 (MQFIDYVKIY…RWVILELKLL (159 aa)) form the Obg domain. Residues 160–331 (ADVGLIGLPN…LLHYLSEKVG (172 aa)) form the OBG-type G domain. GTP is bound by residues 166–173 (GLPNAGKS), 191–195 (FTTLI), 213–216 (DIPG), 283–286 (TKID), and 312–314 (SAV). Residues serine 173 and threonine 193 each coordinate Mg(2+).

This sequence belongs to the TRAFAC class OBG-HflX-like GTPase superfamily. OBG GTPase family. In terms of assembly, monomer. The cofactor is Mg(2+).

Its subcellular location is the cytoplasm. Functionally, an essential GTPase which binds GTP, GDP and possibly (p)ppGpp with moderate affinity, with high nucleotide exchange rates and a fairly low GTP hydrolysis rate. Plays a role in control of the cell cycle, stress response, ribosome biogenesis and in those bacteria that undergo differentiation, in morphogenesis control. The chain is GTPase Obg from Thermodesulfovibrio yellowstonii (strain ATCC 51303 / DSM 11347 / YP87).